The chain runs to 284 residues: MLSKQIPLGIYEKALPAGECWLERLRLAKTLGFDFVEMSVDETDARLARLDWSREQRLALVSAVAETGVRVPSMCLSAHRRFPLGSEDDAVRAQGLEIMRKAIQFAQDVGIRVIQLAGYDVYYQQANDETRCRFRDGLKESVDMASRAQVTLAMEIMDYPLMNSISKALGYAHYLNNPCFQLYPDIGNLSAWDNDVQMELQAGIGHIVAVHVKDTKPGVFKNVPFGEGVVDFERCFETLKQSGYCGPYLIEMWSETAENPAAEVAKARDWVKARMAKAGMVEAA.

This sequence belongs to the L-ribulose-5-phosphate 3-epimerase family.

The enzyme catalyses L-ribulose 5-phosphate = L-xylulose 5-phosphate. It participates in cofactor degradation; L-ascorbate degradation; D-xylulose 5-phosphate from L-ascorbate: step 3/4. Catalyzes the isomerization of L-xylulose-5-phosphate to L-ribulose-5-phosphate. Is involved in the anaerobic L-ascorbate utilization. This is L-ribulose-5-phosphate 3-epimerase UlaE from Salmonella typhi.